A 264-amino-acid chain; its full sequence is Thymidylate synthase (264 aa).

Position 21 (Arg-21) interacts with dUMP. His-51 contributes to the (6R)-5,10-methylene-5,6,7,8-tetrahydrofolate binding site. 126–127 (RR) provides a ligand contact to dUMP. Cys-146 functions as the Nucleophile in the catalytic mechanism. DUMP contacts are provided by residues 166–169 (RSAD), Asn-177, and 207–209 (HLY). Asp-169 contacts (6R)-5,10-methylene-5,6,7,8-tetrahydrofolate. Ala-263 is a binding site for (6R)-5,10-methylene-5,6,7,8-tetrahydrofolate.

The protein belongs to the thymidylate synthase family. Bacterial-type ThyA subfamily. As to quaternary structure, homodimer.

The protein resides in the cytoplasm. The catalysed reaction is dUMP + (6R)-5,10-methylene-5,6,7,8-tetrahydrofolate = 7,8-dihydrofolate + dTMP. It functions in the pathway pyrimidine metabolism; dTTP biosynthesis. In terms of biological role, catalyzes the reductive methylation of 2'-deoxyuridine-5'-monophosphate (dUMP) to 2'-deoxythymidine-5'-monophosphate (dTMP) while utilizing 5,10-methylenetetrahydrofolate (mTHF) as the methyl donor and reductant in the reaction, yielding dihydrofolate (DHF) as a by-product. This enzymatic reaction provides an intracellular de novo source of dTMP, an essential precursor for DNA biosynthesis. The protein is Thymidylate synthase of Ralstonia nicotianae (strain ATCC BAA-1114 / GMI1000) (Ralstonia solanacearum).